We begin with the raw amino-acid sequence, 394 residues long: Dual specificity protein phosphatase 4 (394 aa).

At valine 2 the chain carries N-acetylvaline. The Rhodanese domain maps to serine 41–serine 159. Residues glycine 195–alanine 336 form the Tyrosine-protein phosphatase domain. Cysteine 280 (phosphocysteine intermediate) is an active-site residue. 2 positions are modified to phosphoserine; by MAPK: serine 386 and serine 391.

It belongs to the protein-tyrosine phosphatase family. Non-receptor class dual specificity subfamily. In terms of assembly, hollow spherical complex composed of 24 subunits with pseudooctahedral symmetry, has a tetramer as the basic unit. Post-translationally, phosphorylation in the C-terminus by ERK1/2 inhibits proteasomal degradation and stabilizes the protein.

The protein resides in the nucleus. It catalyses the reaction O-phospho-L-tyrosyl-[protein] + H2O = L-tyrosyl-[protein] + phosphate. It carries out the reaction O-phospho-L-seryl-[protein] + H2O = L-seryl-[protein] + phosphate. The catalysed reaction is O-phospho-L-threonyl-[protein] + H2O = L-threonyl-[protein] + phosphate. Its function is as follows. Regulates mitogenic signal transduction by dephosphorylating both Thr and Tyr residues on MAP kinases ERK1 and ERK2. This chain is Dual specificity protein phosphatase 4 (DUSP4), found in Homo sapiens (Human).